The following is a 179-amino-acid chain: Large ribosomal subunit protein uL6c (179 aa).

Belongs to the universal ribosomal protein uL6 family. As to quaternary structure, part of the 50S ribosomal subunit.

It localises to the plastid. It is found in the chloroplast. Functionally, binds 23S rRNA. The polypeptide is Large ribosomal subunit protein uL6c (rpl6) (Guillardia theta (Cryptophyte)).